The primary structure comprises 248 residues: 1-(5-phosphoribosyl)-5-[(5-phosphoribosylamino)methylideneamino] imidazole-4-carboxamide isomerase (248 aa).

Aspartate 8 (proton acceptor) is an active-site residue. The active-site Proton donor is the aspartate 129.

It belongs to the HisA/HisF family.

It is found in the cytoplasm. It catalyses the reaction 1-(5-phospho-beta-D-ribosyl)-5-[(5-phospho-beta-D-ribosylamino)methylideneamino]imidazole-4-carboxamide = 5-[(5-phospho-1-deoxy-D-ribulos-1-ylimino)methylamino]-1-(5-phospho-beta-D-ribosyl)imidazole-4-carboxamide. It functions in the pathway amino-acid biosynthesis; L-histidine biosynthesis; L-histidine from 5-phospho-alpha-D-ribose 1-diphosphate: step 4/9. The polypeptide is 1-(5-phosphoribosyl)-5-[(5-phosphoribosylamino)methylideneamino] imidazole-4-carboxamide isomerase (Rhizobium etli (strain CIAT 652)).